A 468-amino-acid chain; its full sequence is Tripartite motif-containing protein 75 (468 aa).

The RING-type zinc-finger motif lies at 16–57 (CSICLDYLSDPVTIECGHNFCRSCIQQSWLDLQELFPCPVCR). Residues 92–133 (EETTLCEKHNQPLSVFCKEDLMVLCPLCTQPPDHQGHHVRPI) form a B box-type zinc finger. Zn(2+) is bound by residues Cys-97, His-100, Cys-119, and His-125. Residues 170–222 (LELREMVENQRQELSSEFEHLNQFLDREQQAVLSRLAEEEKDNQQKLSANITA) are a coiled coil. In terms of domain architecture, B30.2/SPRY spans 276 to 468 (CSFPPQYSAL…LRICTGTVCE (193 aa)).

Belongs to the TRIM/RBCC family.

The protein resides in the cytoplasm. The protein localises to the cytoskeleton. It localises to the spindle. In terms of biological role, may play a role in female meiosis. The polypeptide is Tripartite motif-containing protein 75 (Homo sapiens (Human)).